The chain runs to 511 residues: Ectonucleoside triphosphate diphosphohydrolase 1 (511 aa).

Residues 1 to 16 (MEDIKDSKVKRFCSKN) are Cytoplasmic-facing. Residues 17–37 (ILIILGFSSVLAVIALIAVGL) form a helical membrane-spanning segment. At 38-478 (THNKPLPENV…LSPPLPHSTY (441 aa)) the chain is on the extracellular side. Positions 46 to 171 (NVKYGIVLDA…DFQGAKIITG (126 aa)) are N-terminal lobe. Asn-73 carries an N-linked (GlcNAc...) asparagine glycan. Cys-84 and Cys-108 are joined by a disulfide. The active-site Proton acceptor is the Glu-174. Residues 205 to 441 (QATFGALDLG…GTSWDQIHFM (237 aa)) form a C-terminal lobe region. Residues Asn-226, Asn-291, and Asn-333 are each glycosylated (N-linked (GlcNAc...) asparagine). Disulfide bonds link Cys-254/Cys-300 and Cys-281/Cys-324. A disulfide bridge links Cys-337 with Cys-342. Asn-374 carries N-linked (GlcNAc...) asparagine glycosylation. Cysteines 391 and 414 form a disulfide. Residues Asn-429 and Asn-458 are each glycosylated (N-linked (GlcNAc...) asparagine). Residues 479-499 (ISLMVLFSLVLVAMVITGLFI) form a helical membrane-spanning segment. Residues 500–511 (FSKPSYFWKEAV) lie on the Cytoplasmic side of the membrane.

The protein belongs to the GDA1/CD39 NTPase family. In terms of assembly, homodimer; disulfide-linked. It depends on Ca(2+) as a cofactor. Requires Mg(2+) as cofactor. In terms of processing, N-glycosylated. The N-terminus is blocked. Post-translationally, palmitoylated on Cys-13; which is required for caveola targeting. Expressed in primary neurons and astrocytes, kidney, liver, muscle, thymus, lung and spleen.

The protein resides in the membrane. It is found in the caveola. The catalysed reaction is a ribonucleoside 5'-triphosphate + 2 H2O = a ribonucleoside 5'-phosphate + 2 phosphate + 2 H(+). It catalyses the reaction a ribonucleoside 5'-triphosphate + H2O = a ribonucleoside 5'-diphosphate + phosphate + H(+). The enzyme catalyses a ribonucleoside 5'-diphosphate + H2O = a ribonucleoside 5'-phosphate + phosphate + H(+). It carries out the reaction ATP + 2 H2O = AMP + 2 phosphate + 2 H(+). The catalysed reaction is ATP + H2O = ADP + phosphate + H(+). It catalyses the reaction ADP + H2O = AMP + phosphate + H(+). The enzyme catalyses CTP + 2 H2O = CMP + 2 phosphate + 2 H(+). It carries out the reaction CTP + H2O = CDP + phosphate + H(+). The catalysed reaction is CDP + H2O = CMP + phosphate + H(+). It catalyses the reaction GTP + 2 H2O = GMP + 2 phosphate + 2 H(+). The enzyme catalyses GTP + H2O = GDP + phosphate + H(+). It carries out the reaction GDP + H2O = GMP + phosphate + H(+). The catalysed reaction is ITP + 2 H2O = IMP + 2 phosphate + 2 H(+). It catalyses the reaction ITP + H2O = IDP + phosphate + H(+). The enzyme catalyses IDP + H2O = IMP + phosphate + H(+). It carries out the reaction UTP + 2 H2O = UMP + 2 phosphate + 2 H(+). The catalysed reaction is UTP + H2O = UDP + phosphate + H(+). It catalyses the reaction UDP + H2O = UMP + phosphate + H(+). Functionally, catalyzes the hydrolysis of both di- and triphosphate nucleotides (NDPs and NTPs) and hydrolyze NTPs to nucleotide monophosphates (NMPs) in two distinct successive phosphate-releasing steps, with NDPs as intermediates and participates in the regulation of extracellular levels of nucleotides. By hydrolyzing proinflammatory ATP and platelet-activating ADP to AMP, it blocks platelet aggregation and supports blood flow. The polypeptide is Ectonucleoside triphosphate diphosphohydrolase 1 (Rattus norvegicus (Rat)).